A 498-amino-acid chain; its full sequence is Pyruvate kinase (498 aa).

Arg-53 is a substrate binding site. K(+)-binding residues include Asn-55, Ser-57, Asp-87, and Thr-88. 55-58 (NFSH) serves as a coordination point for ATP. ATP is bound by residues Arg-94 and Lys-178. Glu-240 is a binding site for Mg(2+). Substrate contacts are provided by Gly-263, Asp-264, and Thr-296. Mg(2+) is bound at residue Asp-264.

This sequence belongs to the pyruvate kinase family. Homotetramer. The cofactor is Mg(2+). It depends on K(+) as a cofactor.

It carries out the reaction pyruvate + ATP = phosphoenolpyruvate + ADP + H(+). Its pathway is carbohydrate degradation; glycolysis; pyruvate from D-glyceraldehyde 3-phosphate: step 5/5. This chain is Pyruvate kinase (PYK), found in Trypanoplasma borreli.